A 277-amino-acid polypeptide reads, in one-letter code: Proteasome subunit beta type-7 (277 aa).

A propeptide spans 1 to 43 (removed in mature form); the sequence is MAAVSVFQPPVGGFSFDNCRRNAVLEADFAKKGFKLPKARKTG. The active-site Nucleophile is threonine 44.

The protein belongs to the peptidase T1B family. The 26S proteasome consists of a 20S proteasome core and two 19S regulatory subunits. The 20S proteasome core is a barrel-shaped complex made of 28 subunits that are arranged in four stacked rings. The two outer rings are each formed by seven alpha subunits, and the two inner rings are formed by seven beta subunits. The proteolytic activity is exerted by three beta-subunits PSMB5, PSMB6 and PSMB7.

It is found in the cytoplasm. Its subcellular location is the nucleus. It catalyses the reaction Cleavage of peptide bonds with very broad specificity.. In terms of biological role, component of the 20S core proteasome complex involved in the proteolytic degradation of most intracellular proteins. This complex plays numerous essential roles within the cell by associating with different regulatory particles. Associated with two 19S regulatory particles, forms the 26S proteasome and thus participates in the ATP-dependent degradation of ubiquitinated proteins. The 26S proteasome plays a key role in the maintenance of protein homeostasis by removing misfolded or damaged proteins that could impair cellular functions, and by removing proteins whose functions are no longer required. Associated with the PA200 or PA28, the 20S proteasome mediates ubiquitin-independent protein degradation. This type of proteolysis is required in several pathways including spermatogenesis (20S-PA200 complex) or generation of a subset of MHC class I-presented antigenic peptides (20S-PA28 complex). Within the 20S core complex, PSMB7 displays a trypsin-like activity. In Mus musculus (Mouse), this protein is Proteasome subunit beta type-7 (Psmb7).